The following is a 91-amino-acid chain: Putative methyltransferase YfdM (91 aa).

In Escherichia coli (strain K12), this protein is Putative methyltransferase YfdM (yfdM).